The primary structure comprises 453 residues: Secreted triacylglycerol lipase LIP3 (453 aa).

The first 19 residues, 1 to 19 (MKLGIVAFTLISFAAQALA), serve as a signal peptide directing secretion. A glycan (N-linked (GlcNAc...) asparagine) is linked at Asn98. A disulfide bridge links Cys115 with Cys284. Ser197 serves as the catalytic Nucleophile. Residue Asn230 is glycosylated (N-linked (GlcNAc...) asparagine). Catalysis depends on residues Asp344 and His378. Cysteines 360 and 406 form a disulfide.

The protein belongs to the AB hydrolase superfamily. Lipase family. Class Lip subfamily.

It is found in the secreted. The protein resides in the cell wall. It catalyses the reaction a triacylglycerol + H2O = a diacylglycerol + a fatty acid + H(+). The enzyme catalyses a monoacylglycerol + H2O = glycerol + a fatty acid + H(+). It carries out the reaction a diacylglycerol + H2O = a monoacylglycerol + a fatty acid + H(+). Functionally, secreted lipase involved in Dandruff and seborrheic dermatitis (D/SD) probably via lipase-mediated breakdown of sebaceous lipids and release of irritating free fatty acids. Has triacylglycerol lipase activity and is able to hydrolyze triolein, tristearin, trilinolein, tripalmitoylglycerol and trihexadecenoin. Hydrolyzes diacylglycerols such as distearin, dilinolein, dipalmitoylglycerol and dipalmitolein. Mostly converts monoolein to di- and triolein, while free fatty acids are only produced in low amounts. This Malassezia globosa (strain ATCC MYA-4612 / CBS 7966) (Dandruff-associated fungus) protein is Secreted triacylglycerol lipase LIP3.